A 420-amino-acid polypeptide reads, in one-letter code: Tyrosine--tRNA ligase 2 (420 aa).

Tyrosine 36 contacts L-tyrosine. Positions 41 to 50 (PTADSLHIGH) match the 'HIGH' region motif. Residues tyrosine 171 and glutamine 175 each contribute to the L-tyrosine site. Residues 231 to 235 (KFGKT) carry the 'KMSKS' region motif. Lysine 234 is an ATP binding site. The region spanning 354–420 (LSLVDLLVTS…GKKKYFLLKY (67 aa)) is the S4 RNA-binding domain.

It belongs to the class-I aminoacyl-tRNA synthetase family. TyrS type 1 subfamily. In terms of assembly, homodimer.

It localises to the cytoplasm. The catalysed reaction is tRNA(Tyr) + L-tyrosine + ATP = L-tyrosyl-tRNA(Tyr) + AMP + diphosphate + H(+). In terms of biological role, catalyzes the attachment of tyrosine to tRNA(Tyr) in a two-step reaction: tyrosine is first activated by ATP to form Tyr-AMP and then transferred to the acceptor end of tRNA(Tyr). This is Tyrosine--tRNA ligase 2 from Enterococcus faecalis (strain ATCC 700802 / V583).